We begin with the raw amino-acid sequence, 185 residues long: Ribosome-recycling factor (185 aa).

Belongs to the RRF family.

The protein localises to the cytoplasm. Functionally, responsible for the release of ribosomes from messenger RNA at the termination of protein biosynthesis. May increase the efficiency of translation by recycling ribosomes from one round of translation to another. This Buchnera aphidicola subsp. Acyrthosiphon pisum (strain 5A) protein is Ribosome-recycling factor.